Reading from the N-terminus, the 561-residue chain is Dihydroxy-acid dehydratase (561 aa).

Cysteine 51 lines the [2Fe-2S] cluster pocket. Aspartate 83 contributes to the Mg(2+) binding site. A [2Fe-2S] cluster-binding site is contributed by cysteine 124. Mg(2+) contacts are provided by aspartate 125 and lysine 126. An N6-carboxylysine modification is found at lysine 126. Residue cysteine 196 coordinates [2Fe-2S] cluster. Glutamate 448 is a Mg(2+) binding site. Serine 474 (proton acceptor) is an active-site residue.

It belongs to the IlvD/Edd family. Homodimer. Requires [2Fe-2S] cluster as cofactor. Mg(2+) serves as cofactor.

The enzyme catalyses (2R)-2,3-dihydroxy-3-methylbutanoate = 3-methyl-2-oxobutanoate + H2O. It carries out the reaction (2R,3R)-2,3-dihydroxy-3-methylpentanoate = (S)-3-methyl-2-oxopentanoate + H2O. It functions in the pathway amino-acid biosynthesis; L-isoleucine biosynthesis; L-isoleucine from 2-oxobutanoate: step 3/4. Its pathway is amino-acid biosynthesis; L-valine biosynthesis; L-valine from pyruvate: step 3/4. Functionally, functions in the biosynthesis of branched-chain amino acids. Catalyzes the dehydration of (2R,3R)-2,3-dihydroxy-3-methylpentanoate (2,3-dihydroxy-3-methylvalerate) into 2-oxo-3-methylpentanoate (2-oxo-3-methylvalerate) and of (2R)-2,3-dihydroxy-3-methylbutanoate (2,3-dihydroxyisovalerate) into 2-oxo-3-methylbutanoate (2-oxoisovalerate), the penultimate precursor to L-isoleucine and L-valine, respectively. The chain is Dihydroxy-acid dehydratase from Pyrobaculum neutrophilum (strain DSM 2338 / JCM 9278 / NBRC 100436 / V24Sta) (Thermoproteus neutrophilus).